The sequence spans 662 residues: Zinc finger protein 17 (662 aa).

Residues 8–101 form the KRAB domain; it reads MVFEDVAIHF…LLKDILHLAE (94 aa). C2H2-type zinc fingers lie at residues 190 to 212, 218 to 240, 246 to 268, 274 to 296, 302 to 324, 358 to 380, 386 to 408, 414 to 436, 442 to 464, 470 to 492, 498 to 520, 526 to 548, 554 to 576, 582 to 604, 610 to 632, and 638 to 660; these read YSCTQCGKDFCHQHTLFEHQKIH, YECSECGKLFRYNSDLIKHQRNH, YKCSECGKAFSLKYNVVQHQKIH, YECSECGKAFLRKSHLLQHQRIH, YVCSECGKAFLTQAHLVGHQKIH, FYCCECGKFFMDSCTLIIHQRVH, YECNECGKFFRYRSTLIRHQKVH, YECSECGKFFMDTSTLIIHQRVH, YECNKCGKFFRYCFTLNRHQRVH, YECSECGKFFVDSCTLKSHQRVH, FECSICGKSFRCRSTLDTHQRIH, YECSECGKFFRHNSNHIRHRRNH, FECTECGRVFSQNSHLIRHQKVH, YKCSKCGKFFMDSSTLISHERVH, YECSECGKVFRYNSSLIKHRRIH, and YQCSECGRVFNQNSHLIQHQKVH.

This sequence belongs to the krueppel C2H2-type zinc-finger protein family.

Its subcellular location is the nucleus. Its function is as follows. May be involved in transcriptional regulation. The sequence is that of Zinc finger protein 17 (ZNF17) from Homo sapiens (Human).